Consider the following 326-residue polypeptide: dTDP-4-dehydro-6-deoxy-D-allose reductase (326 aa).

Residues 15–21 (GALGFIG) and 129–132 (MSSS) each bind NADP(+). Tyrosine 160 acts as the Proton donor/acceptor in catalysis. NADP(+)-binding positions include lysine 164 and 187–190 (PGNV).

It belongs to the NAD(P)-dependent epimerase/dehydratase family.

It catalyses the reaction dTDP-6-deoxy-alpha-D-allose + NAD(+) = dTDP-4-dehydro-6-deoxy-alpha-D-allose + NADH + H(+). It carries out the reaction dTDP-6-deoxy-alpha-D-allose + NADP(+) = dTDP-4-dehydro-6-deoxy-alpha-D-allose + NADPH + H(+). Its function is as follows. Catalyzes the stereospecific reduction of the C-4 keto group of dTDP-4-dehydro-6-deoxy-D-allose, leading to dTDP-6-deoxy-D-allose, an intermediate in the biosynthesis of the mycinose moiety of the chalcomycin antibiotic. The polypeptide is dTDP-4-dehydro-6-deoxy-D-allose reductase (chmD) (Streptomyces bikiniensis).